A 367-amino-acid chain; its full sequence is Heme A synthase (367 aa).

8 consecutive transmembrane segments (helical) span residues 26-46 (IRGW…VGGA), 111-131 (LLAR…WVTG), 139-159 (LPLL…WWMV), 174-194 (LATH…IYRG), 212-232 (AAVI…VAGL), 272-292 (FVHR…MIAA), 305-325 (SVLL…TLLL), and 327-347 (VPIG…GFAI). His-274 contributes to the heme binding site. His-335 serves as a coordination point for heme.

This sequence belongs to the COX15/CtaA family. Type 2 subfamily. As to quaternary structure, interacts with CtaB. It depends on heme b as a cofactor.

Its subcellular location is the cell membrane. The enzyme catalyses Fe(II)-heme o + 2 A + H2O = Fe(II)-heme a + 2 AH2. It participates in porphyrin-containing compound metabolism; heme A biosynthesis; heme A from heme O: step 1/1. Catalyzes the conversion of heme O to heme A by two successive hydroxylations of the methyl group at C8. The first hydroxylation forms heme I, the second hydroxylation results in an unstable dihydroxymethyl group, which spontaneously dehydrates, resulting in the formyl group of heme A. This is Heme A synthase from Sinorhizobium medicae (strain WSM419) (Ensifer medicae).